Reading from the N-terminus, the 141-residue chain is MLTADDKKLLTQLWEKVAGHQEEFGSEALQRMFLTYPQTKTYFPHFDLHPGSEQVRGHGKKVAAALGNAVKSLDNLSQALSELSNLHAYNLRVDPANFKLLAQCFQVVLATHLGKDYSPEMHAAFDKFLSAVAAVLAEKYR.

Residues 1 to 141 (MLTADDKKLL…VAAVLAEKYR (141 aa)) form the Globin domain. 2 residues coordinate heme b: H58 and H87.

The protein belongs to the globin family. In terms of assembly, heterotetramer of two alpha-D chains and two beta chains. Red blood cells.

Functionally, involved in oxygen transport from the lung to the various peripheral tissues. This is Hemoglobin subunit alpha-D (HBAD) from Chloephaga melanoptera (Andean goose).